We begin with the raw amino-acid sequence, 920 residues long: Phosphoenolpyruvate carboxylase (920 aa).

Catalysis depends on residues histidine 138 and lysine 583.

It belongs to the PEPCase type 1 family. Mg(2+) is required as a cofactor.

It carries out the reaction oxaloacetate + phosphate = phosphoenolpyruvate + hydrogencarbonate. In terms of biological role, forms oxaloacetate, a four-carbon dicarboxylic acid source for the tricarboxylic acid cycle. This Streptococcus pyogenes serotype M1 protein is Phosphoenolpyruvate carboxylase.